The chain runs to 275 residues: Probable 2' cyclic ADP-D-ribose synthase TcpB (275 aa).

Over residues 17–32 (RLKADDSREMSKEKQA) the composition is skewed to basic and acidic residues. The interval 17–66 (RLKADDSREMSKEKQAQSKAHKAQQAISSAKSLSTQKSKMSELERATRDG) is disordered. Low complexity predominate over residues 39–48 (AQQAISSAKS). Over residues 55–64 (KMSELERATR) the composition is skewed to basic and acidic residues. Residues 142–275 (EEYDFFISHA…EIAKELHSLI (134 aa)) enclose the TIR domain. NAD(+) contacts are provided by residues 151–152 (AS) and Lys-181. Residue Glu-217 is part of the active site.

Homodimer. Interacts with host TIRAP, and probably host MYD88. Interacts with host TLR4, abolishes the interaction of host TIRAP with TLR4.

It localises to the secreted. The protein localises to the host cell membrane. The enzyme catalyses NAD(+) + H2O = ADP-D-ribose + nicotinamide + H(+). It catalyses the reaction NAD(+) = 2'cADPR + nicotinamide + H(+). In terms of biological role, virulence factor that interferes with host Toll-like receptor 2 (TLR2) and TLR4 signaling, resulting in the reduction of dendritic cell maturation, inhibition of pro-inflammatory cytokine secretion and impaired NF-kappa-B activation in macrophages. Binds host lipids. Has NAD(+) hydrolase (NADase) activity, catalyzes cleavage of NAD(+) into ADP-D-ribose (ADPR) and nicotinamide, also generates a cyclization variant of cyclic ADPR (cADPR), termed v-cADPR (probably 2'cADPR). The protein is Probable 2' cyclic ADP-D-ribose synthase TcpB (tcpB) of Brucella melitensis biotype 2 (strain ATCC 23457).